We begin with the raw amino-acid sequence, 438 residues long: Protein translocase subunit SecY (438 aa).

A helical transmembrane segment spans residues 1-43 (MKIKPILELIPEVKRPLKGVSFKEKIQWTGLVLILYFILGTID). At 44-54 (IYMGGAEMPAM) the chain is on the extracellular side. The helical intramembrane region spans 55-62 (FAFWQTVT). The discontinuously helical transmembrane segment at 55–83 (FAFWQTVTASKMGTLITLGIGPIVTAGII) threads the bilayer. The stretch at 63 to 74 (ASKMGTLITLGI) is an intramembrane region. Residues 75–83 (GPIVTAGII) constitute an intramembrane region (helical). Residues 84-104 (MQLLVGSELISLDLSKPMNRA) are Cytoplasmic-facing. The helical transmembrane segment at 105-129 (LFQGLQKLFGIFLCFLEAVMFVGAG) threads the bilayer. At 130 to 136 (AFGVVNS) the chain is on the extracellular side. Residues 137–161 (TLALILVLQLALGAILVIYLDEIVS) form a helical membrane-spanning segment. Topologically, residues 162–167 (RYGIGS) are cytoplasmic. The chain crosses the membrane as a helical span at residues 168 to 186 (GIGLFIAAGVAQTIFVGAF). Residues 187 to 209 (GAEGYLWKFFSAMSVGSLGIAFE) are Extracellular-facing. The helical transmembrane segment at 210 to 231 (YILPILSTLFVFLVVVYVESIR) threads the bilayer. The Cytoplasmic segment spans residues 232–256 (VEIPLAHGRVKGAVGKYPIKFIYVS). A helical transmembrane segment spans residues 257-278 (NLPVILAAALFANIQLWGMFLD). Over 279–315 (RMGYPILGQYSNGTAVSGIAYYFSTPYGISNIISDPL) the chain is Extracellular. A helical transmembrane segment spans residues 316–335 (HAIFYTLMMVIFCILFGLFW). The Cytoplasmic segment spans residues 336-378 (VETSGLDAKSMAKKLGNLDMAIKGFRKSQKSIEQRLKRYIKPI). A helical transmembrane segment spans residues 379–397 (TVMGSAFVGFLAAAADFTG). Residues 398–400 (ALG) are Extracellular-facing. A helical membrane pass occupies residues 401 to 415 (GGTGVLLTVSIVYRL). At 416-438 (YEQLVQEQLSELHPAVAKFVGKR) the chain is on the cytoplasmic side.

The protein belongs to the SecY/SEC61-alpha family. In terms of assembly, component of the Sec protein translocase complex. Heterotrimer consisting of alpha (SecY), beta (SecG) and gamma (SecE) subunits. The heterotrimers can form oligomers, although 1 heterotrimer is thought to be able to translocate proteins. Interacts with the ribosome. May interact with SecDF, and other proteins may be involved.

It localises to the cell membrane. Its function is as follows. The central subunit of the protein translocation channel SecYEG. Consists of two halves formed by TMs 1-5 and 6-10. These two domains form a lateral gate at the front which open onto the bilayer between TMs 2 and 7, and are clamped together by SecE at the back. The channel is closed by both a pore ring composed of hydrophobic SecY resides and a short helix (helix 2A) on the extracellular side of the membrane which forms a plug. The plug probably moves laterally to allow the channel to open. The ring and the pore may move independently. The chain is Protein translocase subunit SecY from Methanococcus vannielii.